A 277-amino-acid chain; its full sequence is Large ribosomal subunit protein uL2c (277 aa).

The segment at 226 to 249 is disordered; it reads NPIDHPHGGGEGRAPIGREKPLTP. Residues 229-246 show a composition bias toward basic and acidic residues; that stretch reads DHPHGGGEGRAPIGREKP.

It belongs to the universal ribosomal protein uL2 family. Part of the 50S ribosomal subunit.

The protein resides in the plastid. Its subcellular location is the chloroplast. The polypeptide is Large ribosomal subunit protein uL2c (rpl2) (Physcomitrium patens (Spreading-leaved earth moss)).